Here is a 130-residue protein sequence, read N- to C-terminus: Mini-ribonuclease 3 (130 aa).

Asp19 is an active-site residue. The disordered stretch occupies residues 69–91; the sequence is EQDVVRRGRNAKGHGAPKSADPA.

This sequence belongs to the MrnC RNase family. In terms of assembly, homodimer. Mg(2+) is required as a cofactor.

Its subcellular location is the cytoplasm. In terms of biological role, involved in correct processing of both the 5' and 3' ends of 23S rRNA precursor. Processes 30S rRNA precursor transcript even in absence of ribonuclease 3 (Rnc); Rnc processes 30S rRNA into smaller rRNA precursors. This chain is Mini-ribonuclease 3, found in Symbiobacterium thermophilum (strain DSM 24528 / JCM 14929 / IAM 14863 / T).